A 438-amino-acid chain; its full sequence is UDP-N-acetylglucosamine 1-carboxyvinyltransferase (438 aa).

Residue 35–36 participates in phosphoenolpyruvate binding; sequence KN. A UDP-N-acetyl-alpha-D-glucosamine-binding site is contributed by Arg105. Catalysis depends on Cys129, which acts as the Proton donor. Cys129 carries the 2-(S-cysteinyl)pyruvic acid O-phosphothioketal modification. UDP-N-acetyl-alpha-D-glucosamine is bound by residues 134-138, Asp321, and Val343; that span reads RPVDL.

This sequence belongs to the EPSP synthase family. MurA subfamily.

The protein resides in the cytoplasm. It carries out the reaction phosphoenolpyruvate + UDP-N-acetyl-alpha-D-glucosamine = UDP-N-acetyl-3-O-(1-carboxyvinyl)-alpha-D-glucosamine + phosphate. It participates in cell wall biogenesis; peptidoglycan biosynthesis. Its function is as follows. Cell wall formation. Adds enolpyruvyl to UDP-N-acetylglucosamine. The chain is UDP-N-acetylglucosamine 1-carboxyvinyltransferase from Synechocystis sp. (strain ATCC 27184 / PCC 6803 / Kazusa).